The following is a 503-amino-acid chain: Alpha-1-syntrophin (503 aa).

PH domains lie at 6 to 263 (RAPR…AQIG) and 287 to 399 (DIKQ…DGCH). The segment at 40 to 68 (LTVSPADGEPGPEPEPAQLNGAAEPGAAP) is disordered. Residues 81-164 (RVTVRKADAG…EVVLEVKYMK (84 aa)) form the PDZ domain. Residues Ser-95, Ser-178, Ser-183, Ser-187, and Ser-194 each carry the phosphoserine modification. The disordered stretch occupies residues 177–203 (TSVGWDSPPASPLQRQPSSPGPQPRNL). Residues 447 to 503 (PFEKLQMSSDDGTSLLFLDFGGAEGEIQLDLHSCPKTMVFIIHSFLSAKVTRLGLLA) enclose the SU domain. The tract at residues 481–503 (PKTMVFIIHSFLSAKVTRLGLLA) is calmodulin-binding.

The protein belongs to the syntrophin family. Monomer and homodimer. Interacts with MAPK12, TGFA, GA and F-actin. Interacts with the other members of the syntrophin family: SNTB1 and SNTB2; with dystrophin protein DMD and related proteins DTNA and UTRN; SGCG and SGCA of the dystrophin glycoprotein complex; NOS1; GRB2; calmodulin and the sodium channel proteins SCN4A and SCN5A. Interacts with MYOC; regulates muscle hypertrophy. Interacts with DTNB. Phosphorylated by CaM-kinase II. Phosphorylation may inhibit the interaction with DMD. In terms of tissue distribution, high expression in skeletal muscle. Expressed at intermediate level in heart, kidney and brain, and at low level in intestine, liver, lung and testis.

The protein localises to the cell membrane. It is found in the sarcolemma. It localises to the cell junction. The protein resides in the cytoplasm. Its subcellular location is the cytoskeleton. Adapter protein that binds to and probably organizes the subcellular localization of a variety of membrane proteins. May link various receptors to the actin cytoskeleton and the extracellular matrix via the dystrophin glycoprotein complex. Plays an important role in synapse formation and in the organization of UTRN and acetylcholine receptors at the neuromuscular synapse. Binds to phosphatidylinositol 4,5-bisphosphate. This chain is Alpha-1-syntrophin (Snta1), found in Mus musculus (Mouse).